Here is a 37-residue protein sequence, read N- to C-terminus: Large ribosomal subunit protein bL36 (37 aa).

This sequence belongs to the bacterial ribosomal protein bL36 family.

The polypeptide is Large ribosomal subunit protein bL36 (Acidothermus cellulolyticus (strain ATCC 43068 / DSM 8971 / 11B)).